A 417-amino-acid chain; its full sequence is MVAFKSDFLNTLQERGFIHQCSDFEGLDALASRNQVTAYTGYDCTAPSLHVGHLLSIMMMHWLQQTGNKPIALMGGGTTRVGDPSGRDETRKILSYDQIDANKESIKGTFLKFLVFGDGKNDAIMTDNAEWLTRLNYIEMLRDVGRHFSINRMLTMDSVKMRLEREQELSFIEFNYMILQSYDYVELARRHGCNLQMGGSDQWGNIVNGVDLGRRMGTHQLYALTCPLLTTSSGAKMGKTAAGAVWLNATMLPVYDYWQYWRNVEDADVGRFLKLFTILPMGEIAKLAALQGSEINEAKKVLATEATALLHGRDEAEKAADTARTTFEQGAISESLPTLDIPRSELASGAGVLALFVKAGLVASNGEARRQIKGGGLRVNDVAVADDKMVLTPDHLTPEGVIKLSMGKKRHVLLRPA.

An L-tyrosine-binding site is contributed by Y39. The short motif at 44–53 (CTAPSLHVGH) is the 'HIGH' region element. Positions 176 and 180 each coordinate L-tyrosine. The 'KMSKS' region motif lies at 236–240 (KMGKT). K239 contacts ATP. Residues 350–417 (AGVLALFVKA…KKRHVLLRPA (68 aa)) form the S4 RNA-binding domain.

It belongs to the class-I aminoacyl-tRNA synthetase family. TyrS type 1 subfamily. As to quaternary structure, homodimer.

It localises to the cytoplasm. It carries out the reaction tRNA(Tyr) + L-tyrosine + ATP = L-tyrosyl-tRNA(Tyr) + AMP + diphosphate + H(+). Functionally, catalyzes the attachment of tyrosine to tRNA(Tyr) in a two-step reaction: tyrosine is first activated by ATP to form Tyr-AMP and then transferred to the acceptor end of tRNA(Tyr). The sequence is that of Tyrosine--tRNA ligase from Nitrobacter winogradskyi (strain ATCC 25391 / DSM 10237 / CIP 104748 / NCIMB 11846 / Nb-255).